Reading from the N-terminus, the 479-residue chain is FAD-dependent monooxygenase sdcF (479 aa).

Positions 40 to 213 (AQLPPSCFVL…TLFDMEAFST (174 aa)) constitute an FAD-binding PCMH-type domain. A Pros-8alpha-FAD histidine modification is found at H79.

It belongs to the oxygen-dependent FAD-linked oxidoreductase family. FAD is required as a cofactor.

It participates in secondary metabolite biosynthesis. Functionally, FAD-dependent monooxygenase; part of the gene cluster that mediates the biosynthesis of the polyenes aspernidgulenes. The carbon backbone of aspernidgulenes is synthesized by the HR-PKS sdgA, which accepts acetyl-CoA as the starter unit and performs malonyl-CoA extensions as well as regioselective methylation and reduction. The resulting nonaketide offloads the HR-PKS by intramolecular lactonization to yield the 5,6-dihydro-alpha-pyrone-containing hexaenoic acids preaspernidgulene A1 and A2. The FAD-dependent monooxygenase sdgC then installs the first epoxide on the penultimate double bond. Subsequently, the FAD-dependent monooxygenase sdgF presumably generates a ketone intermediate through Meinwald rearrangement involving a hydride shift. Next, sdgC introduces another epoxide on the last olefin of the ketone intermediate after E/Z isomerization. The epoxide hydrolase sdgD then catalyzes stereospecific cyclization of the 5,6-dihydro-alpha-pyrone and opening of the epoxide ring to form an oxygenated trimethylcyclopentanone and an oxabicyclo[2.2.1]heptane unit. Finally, the bicyclic unit undergoes hydrolytic cleavage, either spontaneously or catalyzed by sdgD, to assemble the dimethyl-gamma-lactone moiety in aspernidgulene A1. The protein is FAD-dependent monooxygenase sdcF of Emericella nidulans (strain FGSC A4 / ATCC 38163 / CBS 112.46 / NRRL 194 / M139) (Aspergillus nidulans).